Reading from the N-terminus, the 614-residue chain is MERNLLSILMRRRLAERNRDAIELAAVQKMEVIGSTEGYTFDDGSDHDDVTKIFVGGGRQGIHYIEFEYVKNGQLESGVHLGVRYRGFTETFEINHLNNEHLESVEGYYDYGSGYIQGLQFKTNFRVSELIGYDEGTKFSLSVKGKRIIGFHGYMKERKIISLGGYFSWIHPRKMEAKGSKGGNQWDDGTNNDGVTKIHVRGGVEGIQYIKFDYVRKSGQHINGSIHGLSGSGFTQTFEIDHLNNEHLVCVEGYYDDESGVIQALQFKTNIKTSELLGYKKGKKFSLVDKRKKIVGFHGYADKNLNSLGAYFTTVSPTKSECYGSSKGIYWDDGVFDFIRTVYVSSNVMNVRYIKFHYYNRAVVVRQHGWNSIVEEDGEKEFELDYPNELITSVEGTMKSFSRSEIRISSLTFKTSKGRTSPTIGIASGTKFLLASKGCAVVGFYGRHDDRDLVAIGAYFSPLPPPTAEKLQAQGGNQGDSWDDGVFEGVRKLYVGQGKNCVAFLKVVYDSNTQVVIGEDHGNKTLFEVKEYELEYPSEYITAVDGCYNKVNGTEVEVITMLRIQTNKRTSIPVGCESNSSFVLKKEGYKIVGFHGKASNMINQLGVHVVPLTE.

Jacalin-type lectin domains are found at residues 27–169 (VQKM…YFSW), 172–314 (PRKM…YFTT), 317–462 (PTKS…YFSP), and 468–611 (AEKL…HVVP).

It belongs to the jacalin lectin family.

The chain is Jacalin-related lectin 14 (JAL14) from Arabidopsis thaliana (Mouse-ear cress).